Reading from the N-terminus, the 100-residue chain is NAD(P)H-quinone oxidoreductase subunit 4L, chloroplastic (100 aa).

3 helical membrane passes run 1–21 (MLEH…FGLI), 29–49 (ALMC…TFSN), and 60–80 (IFAI…LAIV).

This sequence belongs to the complex I subunit 4L family. In terms of assembly, NDH is composed of at least 16 different subunits, 5 of which are encoded in the nucleus.

The protein resides in the plastid. It localises to the chloroplast thylakoid membrane. It carries out the reaction a plastoquinone + NADH + (n+1) H(+)(in) = a plastoquinol + NAD(+) + n H(+)(out). The catalysed reaction is a plastoquinone + NADPH + (n+1) H(+)(in) = a plastoquinol + NADP(+) + n H(+)(out). NDH shuttles electrons from NAD(P)H:plastoquinone, via FMN and iron-sulfur (Fe-S) centers, to quinones in the photosynthetic chain and possibly in a chloroplast respiratory chain. The immediate electron acceptor for the enzyme in this species is believed to be plastoquinone. Couples the redox reaction to proton translocation, and thus conserves the redox energy in a proton gradient. The protein is NAD(P)H-quinone oxidoreductase subunit 4L, chloroplastic of Physcomitrium patens (Spreading-leaved earth moss).